Consider the following 264-residue polypeptide: [LysW]-aminoadipate/[LysW]-glutamate kinase (264 aa).

Substrate is bound by residues 35–36 (GG), Arg62, and Asn167.

This sequence belongs to the acetylglutamate kinase family. LysZ subfamily.

The protein localises to the cytoplasm. It carries out the reaction [amino-group carrier protein]-C-terminal-N-(1,4-dicarboxybutan-1-yl)-L-glutamine + ATP = [amino-group carrier protein]-C-terminal-N-(1-carboxy-5-phosphooxy-5-oxopentan-1-yl)-L-glutamine + ADP. It catalyses the reaction [amino-group carrier protein]-C-terminal-gamma-(L-glutamyl)-L-glutamate + ATP = [amino-group carrier protein]-C-terminal-gamma-(5-phospho-L-glutamyl)-L-glutamate + ADP. Its pathway is amino-acid biosynthesis; L-lysine biosynthesis via AAA pathway; L-lysine from L-alpha-aminoadipate (Thermus route): step 2/5. The protein operates within amino-acid biosynthesis; L-arginine biosynthesis. Its function is as follows. Involved in both the arginine and lysine biosynthetic pathways. Phosphorylates the LysW-bound precursors glutamate (for arginine biosynthesis), respectively alpha-aminoadipate (for lysine biosynthesis). The polypeptide is [LysW]-aminoadipate/[LysW]-glutamate kinase (Saccharolobus islandicus (strain L.S.2.15 / Lassen #1) (Sulfolobus islandicus)).